The following is a 483-amino-acid chain: Membrane-bound lytic murein transglycosylase F (483 aa).

The N-terminal stretch at 1-18 (MKGLVIRISVALALLLWA) is a signal peptide. The segment at 19–270 (VDMVFPWQQI…RIEEKYFSHI (252 aa)) is non-LT domain. Residues 272–483 (QFDYVDIKSY…IMITPQNSQD (212 aa)) form an LT domain region. Glutamate 315 is a catalytic residue.

In the N-terminal section; belongs to the bacterial solute-binding protein 3 family. It in the C-terminal section; belongs to the transglycosylase Slt family.

The protein localises to the cell outer membrane. It carries out the reaction Exolytic cleavage of the (1-&gt;4)-beta-glycosidic linkage between N-acetylmuramic acid (MurNAc) and N-acetylglucosamine (GlcNAc) residues in peptidoglycan, from either the reducing or the non-reducing ends of the peptidoglycan chains, with concomitant formation of a 1,6-anhydrobond in the MurNAc residue.. Its function is as follows. Murein-degrading enzyme that degrades murein glycan strands and insoluble, high-molecular weight murein sacculi, with the concomitant formation of a 1,6-anhydromuramoyl product. Lytic transglycosylases (LTs) play an integral role in the metabolism of the peptidoglycan (PG) sacculus. Their lytic action creates space within the PG sacculus to allow for its expansion as well as for the insertion of various structures such as secretion systems and flagella. The sequence is that of Membrane-bound lytic murein transglycosylase F from Actinobacillus succinogenes (strain ATCC 55618 / DSM 22257 / CCUG 43843 / 130Z).